Reading from the N-terminus, the 830-residue chain is Heavy metal tolerance protein (830 aa).

Residues 1 to 27 form the signal peptide; that stretch reads MVLRYNSPRLNILELVLLYVGFFSIGS. 3 helical membrane passes run 51–71, 88–108, and 126–146; these read PIGI…VDIS, TTVV…ISCA, and LSVL…IVYS. N-linked (GlcNAc...) asparagine glycosylation is present at asparagine 150. Helical transmembrane passes span 156–176, 263–283, and 304–324; these read IVLA…AIYL, FQIF…ILAP, and DVIL…IGSL. One can recognise an ABC transmembrane type-1 domain in the interval 265–550; sequence IFICIVLLFL…FGTLYRSLQN (286 aa). Asparagine 350 is a glycosylation site (N-linked (GlcNAc...) asparagine). 2 helical membrane-spanning segments follow: residues 381 to 401 and 403 to 423; these read VVFQ…YFFI and FDIY…YVTV. Residues 429-433, 492-495, and glycine 542 contribute to the glutathione site; these read RTEAR and NIVQ. Residues 490–511 form a helical membrane-spanning segment; it reads FLNIVQGGIFTFSLAIACLLSA. The 235-residue stretch at 584–818 folds into the ABC transporter domain; it reads VIFSHVSFAY…DGGAYKKMWF (235 aa). Residues tyrosine 593 and 617–628 contribute to the ATP site; that span reads GESGGGKSTIMR.

Belongs to the ABC transporter superfamily. ABCB family. Heavy Metal importer (TC 3.A.1.210) subfamily.

It is found in the vacuole membrane. Involved in metal tolerance. Probably involved in the transport of metal-bound phytochelatins. Compartmentalizes cadmium within vacuoles, thereby protecting cells from cadmium toxicity. This Schizosaccharomyces pombe (strain 972 / ATCC 24843) (Fission yeast) protein is Heavy metal tolerance protein (hmt1).